Here is a 149-residue protein sequence, read N- to C-terminus: MKKEKRQRLIKQFVKEYEIDKQERLVELLAKKDVLVTQATVSRDIRELNLTKVPSQEGLMIYKVFSEEHLQTDIKLKKKLREVVVKIDCVDQLMVIKTLPGNAHVIGVLFDELDWKEKIGCICGNDTCLIISQSKSDREIIEERLNLII.

It belongs to the ArgR family.

Its subcellular location is the cytoplasm. Its pathway is amino-acid degradation; L-arginine degradation via ADI pathway. Functionally, regulates the transcription of the arc operon, involved in arginine catabolism. In Bacillus cereus (strain ATCC 14579 / DSM 31 / CCUG 7414 / JCM 2152 / NBRC 15305 / NCIMB 9373 / NCTC 2599 / NRRL B-3711), this protein is Arginine regulator (argR1).